The sequence spans 80 residues: Serine palmitoyltransferase small subunit A-B (80 aa).

The Cytoplasmic portion of the chain corresponds to 1 to 21 (MKVSCEDVNGPRSSLGRAWNH). The helical transmembrane segment at 22–38 (VSWLYYQYLLVTALYML) threads the bilayer. At 39–43 (EPWER) the chain is on the lumenal side. Residues 44–66 (TVFNSMLVSIVGMALYTGYIFMP) form a helical membrane-spanning segment. Residues 67 to 80 (QHILAILHYFEIVQ) lie on the Cytoplasmic side of the membrane.

This sequence belongs to the SPTSS family. SPTSSA subfamily. Component of the serine palmitoyltransferase (SPT) complex, which is composed of SPTLC1, SPTLC2 or SPTLC3 and SPTSSA or SPTSSB. The heterodimer consisting of SPTLC1 and SPTLC2/SPTLC3 forms the catalytic core of the enzyme, while SPTSSA or SPTSSB subunits determine substrate specificity. SPT also interacts with ORMDL proteins, especially ORMDL3, which negatively regulate SPT activity in the presence of ceramides.

Its subcellular location is the endoplasmic reticulum membrane. Its pathway is lipid metabolism; sphingolipid metabolism. Its function is as follows. Component of the serine palmitoyltransferase multisubunit enzyme (SPT) that catalyzes the initial and rate-limiting step in sphingolipid biosynthesis by condensing L-serine and activated acyl-CoA (most commonly palmitoyl-CoA) to form long-chain bases. The SPT complex is composed of SPTLC1, SPTLC2 or SPTLC3 and SPTSSA or SPTSSB. Within this complex, the heterodimer consisting of SPTLC1 and SPTLC2/SPTLC3 forms the catalytic core. Within the SPT complex, SPTSSA stimulates the catalytic activity and plays a role in substrate specificity, which depends upon the overall complex composition. The SPTLC1-SPTLC2-SPTSSA complex shows a strong preference for C16-CoA substrate, while the SPTLC1-SPTLC3-SPTSSA isozyme uses both C14-CoA and C16-CoA as substrates, with a slight preference for C14-CoA. Independently of its action as a SPT component, may be involved in MBOAT7 localization to mitochondria-associated membranes, a membrane bridge between the endoplasmic reticulum and mitochondria, may hence affect MBOAT7-catalyzed incorporation of arachidonic acid into phosphatidylinositol. This is Serine palmitoyltransferase small subunit A-B (sptssa-b) from Xenopus laevis (African clawed frog).